The following is a 515-amino-acid chain: Galactokinase (515 aa).

Alpha-D-galactose is bound by residues Arg48, Asp54, His55, and Asp57. ATP contacts are provided by Gly155, Gly157, Ser159, and Ser160. An alpha-D-galactose-binding site is contributed by Asp205. Catalysis depends on Asp205, which acts as the Proton acceptor. ATP-binding residues include Ser249, Asn250, and Lys251. Residue Tyr259 coordinates alpha-D-galactose.

It belongs to the GHMP kinase family. GalK subfamily.

The enzyme catalyses alpha-D-galactose + ATP = alpha-D-galactose 1-phosphate + ADP + H(+). It functions in the pathway carbohydrate metabolism; galactose metabolism. Galactokinase is a key enzyme in the galactose metabolism where it catalyzes the conversion of alpha-D-galactose to galactose 1-phosphate. Can also induce the transcription of the gal genes in response to the organism being challenged with galactose as the sole source of carbon. The chain is Galactokinase from Candida albicans (Yeast).